A 370-amino-acid chain; its full sequence is MAAERQDALREFVAVTGAEEDRARFFLESAGWDLQIALASFYEDGGDEDIVTISQATPSSVSRGTAPSDNRVTSFRDLIHDQDEDEEEEEGQRFYAGGSERSGQQIVGPPRKRSPNELVDDLFKGAKEHGAVAVERVTKSPGETSKPRPFAGGGYRLGAAPEEESAYVAGERRRHSGQDVHVVLKLWKTGFSLDNGELRSYQDPSNAQFLESIRRGEVPAELRRLAHGGQVNLDMEDHRDEDFVKPKGAFKAFTGEGQKLGSTAPQILNTSSPAQQAENEAKASSSISIDESQPTTNIQIRLADGGRLVQKFNHSHRISDIRLFIVDARPAMAATSFVLMTTFPNKELADENQTLKEANLLNAVIVQRLT.

The tract at residues 54–73 is disordered; it reads SQATPSSVSRGTAPSDNRVT. 3 positions are modified to phosphoserine: S74, S102, and S114. Disordered regions lie at residues 80-116 and 137-157; these read HDQD…RSPN and VTKS…GYRL. The short motif at 109–115 is the Nuclear localization signal element; sequence PPRKRSP. S140 carries the post-translational modification Phosphoserine; by CDK1. Y167 carries the post-translational modification Phosphotyrosine. Residues 172–175 carry the Nuclear localization signal motif; the sequence is RRRH. Phosphoserine occurs at positions 176, 192, and 272. The 66-residue stretch at 179–244 folds into the SEP domain; it reads DVHVVLKLWK…MEDHRDEDFV (66 aa). The interval 272–292 is disordered; the sequence is SPAQQAENEAKASSSISIDES. One can recognise a UBX domain in the interval 291 to 368; sequence ESQPTTNIQI…NLLNAVIVQR (78 aa).

In terms of assembly, part of a ternary complex containing STX5A, NSFL1C and VCP. NSFL1C forms a homotrimer that binds to one end of a VCP homohexamer. The complex binds to membranes enriched in phosphatidylethanolamine-containing lipids and promotes Golgi membrane fusion. Interaction with VCIP135 leads to dissociation of the complex via ATP hydrolysis by VCP. Binds ubiquitin and mono-ubiquitinated proteins via its N-terminal UBA-like domain when bound to VCP. Post-translationally, phosphorylated during mitosis. Phosphorylation inhibits interaction with Golgi membranes and is required for the fragmentation of the Golgi stacks during mitosis.

The protein localises to the nucleus. It localises to the golgi apparatus. It is found in the golgi stack. The protein resides in the chromosome. Its subcellular location is the cytoplasm. The protein localises to the cytoskeleton. It localises to the microtubule organizing center. It is found in the centrosome. Its function is as follows. Reduces the ATPase activity of VCP. Necessary for the fragmentation of Golgi stacks during mitosis and for VCP-mediated reassembly of Golgi stacks after mitosis. May play a role in VCP-mediated formation of transitional endoplasmic reticulum (tER). Inhibits the activity of CTSL (in vitro). Together with UBXN2B/p37, regulates the centrosomal levels of kinase AURKA/Aurora A during mitotic progression by promoting AURKA removal from centrosomes in prophase. Also, regulates spindle orientation during mitosis. This chain is NSFL1 cofactor p47 (NSFL1C), found in Bos taurus (Bovine).